A 129-amino-acid chain; its full sequence is DNA-directed RNA polymerase subunit omega (129 aa).

Residues 77-98 are disordered; sequence VDEPESEVVPALSSAPQNPEAI.

This sequence belongs to the RNA polymerase subunit omega family. The RNAP catalytic core consists of 2 alpha, 1 beta, 1 beta' and 1 omega subunit. When a sigma factor is associated with the core the holoenzyme is formed, which can initiate transcription.

The enzyme catalyses RNA(n) + a ribonucleoside 5'-triphosphate = RNA(n+1) + diphosphate. In terms of biological role, promotes RNA polymerase assembly. Latches the N- and C-terminal regions of the beta' subunit thereby facilitating its interaction with the beta and alpha subunits. The chain is DNA-directed RNA polymerase subunit omega from Methylocella silvestris (strain DSM 15510 / CIP 108128 / LMG 27833 / NCIMB 13906 / BL2).